A 183-amino-acid chain; its full sequence is Gamma-crystallin N (183 aa).

Beta/gamma crystallin 'Greek key' domains lie at 6-46 (GKIT…RVES), 47-89 (GAWV…RPVG), 95-136 (FRID…KVYG), and 138-180 (GAWV…RRVL).

It belongs to the beta/gamma-crystallin family. In terms of assembly, monomer. Detected in the auditory hindbrain where it is highly expressed in the medial nucleus of the trapezoid body, but also present in other nuclei of the superior olivary complex.

Its function is as follows. Crystallins are the dominant structural components of the vertebrate eye lens. Also plays an important role for integrity and function of auditory nuclei. In Rattus norvegicus (Rat), this protein is Gamma-crystallin N.